We begin with the raw amino-acid sequence, 214 residues long: Probable transaldolase (214 aa).

Lys-83 serves as the catalytic Schiff-base intermediate with substrate.

This sequence belongs to the transaldolase family. Type 3B subfamily.

It is found in the cytoplasm. It catalyses the reaction D-sedoheptulose 7-phosphate + D-glyceraldehyde 3-phosphate = D-erythrose 4-phosphate + beta-D-fructose 6-phosphate. It participates in carbohydrate degradation; pentose phosphate pathway; D-glyceraldehyde 3-phosphate and beta-D-fructose 6-phosphate from D-ribose 5-phosphate and D-xylulose 5-phosphate (non-oxidative stage): step 2/3. Its function is as follows. Transaldolase is important for the balance of metabolites in the pentose-phosphate pathway. This is Probable transaldolase from Leptospira interrogans serogroup Icterohaemorrhagiae serovar copenhageni (strain Fiocruz L1-130).